A 397-amino-acid polypeptide reads, in one-letter code: Vacuolar protein sorting-associated protein 37A (397 aa).

The interval 1 to 22 is disordered; sequence MSWLFPLTKSASSSAAGSPGGL. S18 carries the post-translational modification Phosphoserine. The 90-residue stretch at 308–397 folds into the VPS37 C-terminal domain; that stretch reads KSTFEKKMQR…AMHSQFHAPL (90 aa).

Belongs to the VPS37 family. In terms of assembly, component of the ESCRT-I complex (endosomal sorting complex required for transport I) which consists of TSG101, VPS28, a VPS37 protein (VPS37A to -D) and MVB12A or MVB12B in a 1:1:1:1 stoichiometry. Interacts with TSG101, VPS28 and HGS. Component of an ESCRT-I complex (endosomal sorting complex required for transport I) which consists of TSG101, VPS28, VPS37A and UBAP1 in a 1:1:1:1 stoichiometry. As to expression, widely expressed. Examined tissues include heart, brain, placenta, liver, skeletal muscle, kidney and pancreas. More abundant in liver. Strongly decreased or undetected in hepatomas.

It is found in the late endosome membrane. The protein localises to the nucleus. Component of the ESCRT-I complex, a regulator of vesicular trafficking process. Required for the sorting of endocytic ubiquitinated cargos into multivesicular bodies. May be involved in cell growth and differentiation. This is Vacuolar protein sorting-associated protein 37A (VPS37A) from Homo sapiens (Human).